We begin with the raw amino-acid sequence, 2692 residues long: Thyroglobulin (2692 aa).

The signal sequence occupies residues 1-19; that stretch reads MALALWVFALLGSACLVSA. Tyrosine 24 is modified (iodotyrosine; alternate). Sulfotyrosine; alternate is present on tyrosine 24. Tyrosine 24 bears the Thyroxine; alternate mark. The residue at position 24 (tyrosine 24) is a Triiodothyronine; alternate. 3 Thyroglobulin type-1 domains span residues 31–92, 93–160, and 161–248; these read LRPC…PVAC, LSFC…PARC, and PGSC…LAGT. 8 disulfides stabilise this stretch: cysteine 34-cysteine 52, cysteine 63-cysteine 70, cysteine 72-cysteine 92, cysteine 96-cysteine 120, cysteine 131-cysteine 138, cysteine 140-cysteine 160, cysteine 164-cysteine 183, and cysteine 194-cysteine 235. Tyrosine 108 bears the Iodotyrosine mark. Residue asparagine 110 is glycosylated (N-linked (GlcNAc...) asparagine). Tyrosine 149 is subject to Iodotyrosine; alternate. Tyrosine 149 is modified (diiodotyrosine; alternate). Asparagine 198 carries an N-linked (GlcNAc...) asparagine glycan. Iodotyrosine is present on residues tyrosine 234 and tyrosine 258. In terms of domain architecture, Thyroglobulin type-1 4 spans 298–358; it reads PTKCEVERFA…TRRPSEPLSC (61 aa). Disulfide bonds link cysteine 301–cysteine 319, cysteine 330–cysteine 336, cysteine 338–cysteine 358, cysteine 364–cysteine 621, cysteine 408–cysteine 609, cysteine 632–cysteine 637, cysteine 639–cysteine 659, cysteine 663–cysteine 688, and cysteine 699–cysteine 704. Asparagine 485, asparagine 497, and asparagine 546 each carry an N-linked (GlcNAc...) asparagine glycan. Thyroglobulin type-1 domains lie at 606–659, 660–727, and 728–923; these read SQGC…RPRC, PTAC…PKQC, and PTPC…VPAC. Iodotyrosine; alternate is present on tyrosine 705. A Thyroxine; alternate modification is found at tyrosine 705. Tyrosine 705 bears the Triiodothyronine; alternate mark. Tyrosine 705 carries the post-translational modification Diiodotyrosine; alternate. 13 cysteine pairs are disulfide-bonded: cysteine 706–cysteine 727, cysteine 731–cysteine 764, cysteine 775–cysteine 900, cysteine 902–cysteine 923, cysteine 927–cysteine 1033, cysteine 1044–cysteine 1051, cysteine 1053–cysteine 1079, cysteine 1128–cysteine 1147, cysteine 1151–cysteine 1171, cysteine 1183–cysteine 1190, cysteine 1192–cysteine 1212, cysteine 1237–cysteine 1287, and cysteine 1262–cysteine 1278. Asparagine 749 carries N-linked (GlcNAc...) asparagine glycosylation. Tyrosine 786 is subject to Iodotyrosine. The N-linked (GlcNAc...) asparagine glycan is linked to asparagine 855. At tyrosine 868 the chain carries Iodotyrosine; alternate. Diiodotyrosine; alternate is present on tyrosine 868. A Diiodotyrosine modification is found at tyrosine 885. The N-linked (GlcNAc...) asparagine glycan is linked to asparagine 949. The residue at position 994 (tyrosine 994) is an Iodotyrosine; alternate. Diiodotyrosine; alternate is present on tyrosine 994. 3 Thyroglobulin type-1 domains span residues 1021-1079, 1088-1147, and 1148-1212; these read SGPL…PTPC, LSAW…SAPC, and PGLC…QPAC. N-linked (GlcNAc...) asparagine glycosylation occurs at asparagine 1142. Tyrosine 1241 is modified (iodotyrosine). Tyrosine 1241 is subject to Thyroxine. N-linked (GlcNAc...) asparagine glycans are attached at residues asparagine 1296 and asparagine 1384. Cystine bridges form between cysteine 1372–cysteine 1392, cysteine 1395–cysteine 1406, cysteine 1409–cysteine 1423, cysteine 1426–cysteine 1443, cysteine 1447–cysteine 1456, cysteine 1476–cysteine 1498, cysteine 1535–cysteine 1559, cysteine 1539–cysteine 1545, cysteine 1571–cysteine 1594, cysteine 1656–cysteine 1681, cysteine 1660–cysteine 1666, cysteine 1665–cysteine 1766, and cysteine 1692–cysteine 1709. Type II repeat units follow at residues 1389–1402, 1403–1419, and 1420–1436; these read PLGC…SYFQ, EEQC…EQTG, and SLAC…TSVG. Tyrosine 1400 bears the Iodotyrosine; alternate mark. Tyrosine 1400 is subject to Diiodotyrosine; alternate. Residues 1444–1498 enclose the Thyroglobulin type-1 11 domain; the sequence is VTACQRDEAGLQCDQDGQYRASQRDRASGKAFCVDSEGRRLPWSETQAPLVDAQC. One copy of the Type IIIA repeat lies at 1535 to 1655; it reads CLADCARDEA…GASLTEAHLF (121 aa). One copy of the Type IIIB repeat lies at 1656-1823; that stretch reads CLLACDRDSC…LFSLQQAHLW (168 aa). An N-linked (GlcNAc...) asparagine glycan is attached at asparagine 1800. Disulfide bonds link cysteine 1824-cysteine 1850, cysteine 1828-cysteine 1835, cysteine 1859-cysteine 1870, cysteine 1927-cysteine 1955, cysteine 1931-cysteine 1937, cysteine 1936-cysteine 2007, cysteine 1966-cysteine 1979, cysteine 2061-cysteine 2085, cysteine 2065-cysteine 2071, and cysteine 2094-cysteine 2103. Residues 1824–1926 form a Type IIIA repeat; sequence CLSRCVQEPS…DKAISSGFFE (103 aa). Residues 1927-2060 form a Type IIIB repeat; sequence CERLCDVDPC…VGDFSAARER (134 aa). Residue asparagine 1944 is glycosylated (N-linked (GlcNAc...) asparagine). The stretch at 2061-2118 is one Type IIIA repeat; the sequence is CLLECSRHQACLVTTLQTRPGAVRCMFYADTQSCTHSLQAQNCQLLLREEATHIYRKP. At tyrosine 2115 the chain carries Iodotyrosine. A cholinesterase-like (ChEL) region spans residues 2119-2692; the sequence is DIPLPGLGSS…PELASKSYSK (574 aa). N-linked (GlcNAc...) asparagine glycosylation is found at asparagine 2181 and asparagine 2226. Residue tyrosine 2467 is modified to Thyroxine. An Iodotyrosine; alternate modification is found at tyrosine 2500. At tyrosine 2500 the chain carries Thyroxine; alternate. Triiodothyronine; alternate is present on tyrosine 2500. Tyrosine 2500 bears the Diiodotyrosine; alternate mark. Iodotyrosine is present on residues tyrosine 2514 and tyrosine 2544. Cysteines 2518 and 2642 form a disulfide. Residue tyrosine 2624 is modified to Diiodotyrosine. The segment covering 2658-2671 has biased composition (acidic residues); that stretch reads EAEDGPLAESEEED. A disordered region spans residues 2658–2692; the sequence is EAEDGPLAESEEEDRPGLTEDLLGLPELASKSYSK. Tyrosine 2690 is subject to Iodotyrosine; alternate. Tyrosine 2690 is subject to Thyroxine; alternate. Tyrosine 2690 is modified (triiodothyronine; alternate). Tyrosine 2690 is modified (diiodotyrosine; alternate).

This sequence belongs to the type-B carboxylesterase/lipase family. Monomer. Homodimer (via ChEL region); occurs in the endoplasmic reticulum and is required for export to the Golgi apparatus. Homooligomer; disulfide-linked; stored in this form in the thyroid follicle lumen. Iodinated on tyrosine residues by TPO. There are 4 pairs of iodinated tyrosines used for coupling: acceptor Tyr-24 is coupled to donor Tyr-149 or Tyr-234, acceptor Tyr-2500 is coupled to donor Tyr-2467, acceptor Tyr-2690 in monomer 1 is coupled to donor Tyr-2690 in monomer 2 and acceptor Tyr-1241 in monomer 1 is coupled to donor Tyr-108 in monomer 2. Post-translationally, sulfated tyrosines are desulfated during iodination. In terms of processing, undergoes sequential proteolysis by cathepsins to release thyroxine (T4) and triiodothyronine (T3) hormones. In the thyroid follicle lumen, cross-linked TG (storage form) is solubilized by limited proteolysis mediated by cathepsins CTSB and/or CTSL. Partially cleaved TG is further processed by CTSK/cathepsin K and/or CTSL resulting in the release of T4. Following endocytosis, further processing occurs leading to the release of T3 and more T4 hormones. As to expression, expressed in thyroid epithelial cells.

It is found in the secreted. In terms of biological role, acts as a substrate for the production of iodinated thyroid hormones thyroxine (T4) and triiodothyronine (T3). The synthesis of T3 and T4 involves iodination of selected tyrosine residues of TG/thyroglobulin followed by their oxidative coupling. Following TG re-internalization and lysosomal-mediated proteolysis, T3 and T4 are released from the polypeptide backbone leading to their secretion into the bloodstream. One dimer produces 7 thyroid hormone molecules. This chain is Thyroglobulin, found in Sus scrofa (Pig).